A 303-amino-acid chain; its full sequence is Mitochondrial carrier homolog 2 (303 aa).

Alanine 2 is subject to N-acetylalanine. Residues 2 to 15 are Mitochondrial intermembrane-facing; it reads ADAASQVLLGSGLT. Solcar repeat units lie at residues 2-98 and 118-206; these read ADAA…YQES and DHVI…VNTY. Residues 16–36 traverse the membrane as a helical segment; it reads ILSQPLMYVKVLIQVGYEPLP. The Cytoplasmic segment spans residues 37–77; that stretch reads PTIGRNIFGRQVCQLPGLFSYAQHIASIDGRRGLFTGLTPR. Residues 78–92 form a helical membrane-spanning segment; that stretch reads LCSGVLGTVVHGKVL. Over 93-135 the chain is Mitochondrial intermembrane; it reads QHYQESDKGEELGPGNVQKEVSSSFDHVIKETTREMIARSAAT. A helical transmembrane segment spans residues 136–156; that stretch reads LITHPFHVITLRSMVQFIGRE. Topologically, residues 157 to 180 are cytoplasmic; that stretch reads SKYCGLCDSIITIYREEGILGFFA. A helical membrane pass occupies residues 181–199; the sequence is GLVPRLLGDILSLWLCNSL. At 200–231 the chain is on the mitochondrial intermembrane side; that stretch reads AYLVNTYALDSGVSTMNEMKSYSQAVTGFFAS. Residues 232–252 form a helical membrane-spanning segment; that stretch reads MLTYPFVLVSNLMAVNNCGLA. At 253 to 280 the chain is on the cytoplasmic side; that stretch reads GGCPPYSPIYTSWIDCWCMLQKEGNMSR. Residues 281–303 form a helical membrane-spanning segment; sequence GNSLFFRKVPFGKTYCCDLKMLI.

Belongs to the mitochondrial carrier (TC 2.A.29) family. As to quaternary structure, interacts with p15BID.

The protein resides in the mitochondrion outer membrane. In terms of biological role, protein insertase that mediates insertion of transmembrane proteins into the mitochondrial outer membrane. Catalyzes insertion of proteins with alpha-helical transmembrane regions, such as signal-anchored, tail-anchored and multi-pass membrane proteins. Does not mediate insertion of beta-barrel transmembrane proteins. Also acts as a receptor for the truncated form of pro-apoptotic BH3-interacting domain death agonist (p15 BID) and has therefore a critical function in apoptosis. Regulates the quiescence/cycling of hematopoietic stem cells (HSCs). Acts as a regulator of mitochondrial fusion, essential for the naive-to-primed interconversion of embryonic stem cells (ESCs). Acts as a regulator of lipid homeostasis and has a regulatory role in adipocyte differentiation and biology. In Homo sapiens (Human), this protein is Mitochondrial carrier homolog 2.